The chain runs to 206 residues: Regulatory protein CysR (206 aa).

An HTH crp-type domain is found at 120 to 196 (RRAEAKLASL…DRALIVRYPE (77 aa)). Positions 156–175 (HQVIAELSGSTRVTTTRLLG) form a DNA-binding region, H-T-H motif.

The protein localises to the cytoplasm. Its function is as follows. Probably regulates the expression of genes from the sulfate permease complex. This chain is Regulatory protein CysR (cysR), found in Synechococcus elongatus (strain ATCC 33912 / PCC 7942 / FACHB-805) (Anacystis nidulans R2).